Here is a 265-residue protein sequence, read N- to C-terminus: tRNA pseudouridine synthase A (265 aa).

Asp58 (nucleophile) is an active-site residue. Tyr116 is a binding site for substrate.

The protein belongs to the tRNA pseudouridine synthase TruA family. Homodimer.

It carries out the reaction uridine(38/39/40) in tRNA = pseudouridine(38/39/40) in tRNA. In terms of biological role, formation of pseudouridine at positions 38, 39 and 40 in the anticodon stem and loop of transfer RNAs. The chain is tRNA pseudouridine synthase A from Neisseria meningitidis serogroup C (strain 053442).